Reading from the N-terminus, the 544-residue chain is Probable protein kinase UbiB (544 aa).

Residues 123–504 (DFDENALASA…QRWQKKMFVL (382 aa)) form the Protein kinase domain. ATP-binding positions include 129-137 (LASASIAQV) and lysine 155. The Proton acceptor role is filled by aspartate 290. The next 2 helical transmembrane spans lie at 501 to 521 (MFVL…FAAL) and 523 to 543 (LAIS…GFLL).

Belongs to the ABC1 family. UbiB subfamily.

Its subcellular location is the cell inner membrane. It participates in cofactor biosynthesis; ubiquinone biosynthesis [regulation]. Its function is as follows. Is probably a protein kinase regulator of UbiI activity which is involved in aerobic coenzyme Q (ubiquinone) biosynthesis. This is Probable protein kinase UbiB from Histophilus somni (strain 129Pt) (Haemophilus somnus).